Consider the following 125-residue polypeptide: Large ribosomal subunit protein bL12 (125 aa).

The protein belongs to the bacterial ribosomal protein bL12 family. In terms of assembly, homodimer. Part of the ribosomal stalk of the 50S ribosomal subunit. Forms a multimeric L10(L12)X complex, where L10 forms an elongated spine to which 2 to 4 L12 dimers bind in a sequential fashion. Binds GTP-bound translation factors.

In terms of biological role, forms part of the ribosomal stalk which helps the ribosome interact with GTP-bound translation factors. Is thus essential for accurate translation. In Helicobacter pylori (strain ATCC 700392 / 26695) (Campylobacter pylori), this protein is Large ribosomal subunit protein bL12.